The chain runs to 326 residues: Fructose operon regulatory protein (326 aa).

Residues 1–58 (MTLDEIAKLAGVSKTTASYVINGKAQKYRISEKTQHKVMAVVEQYNFRPDHAASALRA) enclose the HTH lacI-type domain. The H-T-H motif DNA-binding region spans 3 to 22 (LDEIAKLAGVSKTTASYVIN).

In terms of assembly, homodimer.

Interaction with F1P may induce a structural change in the DNA spacer region between the -35 and -10 elements, thereby facilitating RNAP binding to the promoter to trigger the transcriptional activation of the fru operon. Interaction with F1P does not release FruR from its binding sequence. Functionally, regulates the expression of the fruBKA (fru) operon, which encodes proteins involved in the import and metabolism of fructose. In the absence of fructose 1-phosphate (F1P), binds to the promoter region of fruB, interferes with the binding of the RNA polymerase (RNAP) to the promoter and represses the expression of the operon. In the presence of F1P, activates the transcription of the fru operon by facilitating the binding of RNAP to the promoter. Essential for the expression of the fru operon and thus for growth on fructose. This is Fructose operon regulatory protein from Vibrio cholerae serotype O1 (strain ATCC 39315 / El Tor Inaba N16961).